The sequence spans 1076 residues: Hormone-sensitive lipase (1076 aa).

2 stretches are compositionally biased toward polar residues: residues M1–D12 and E38–P64. Disordered stretches follow at residues M1 to Q198 and V229 to M250. Residues A65–A77 show a composition bias toward basic and acidic residues. Positions A94–G116 are enriched in polar residues. Pro residues predominate over residues G140 to A149. Residues Q150–A161 are compositionally biased toward low complexity. Over residues P172–Q198 the composition is skewed to polar residues. Residues D237–S246 are compositionally biased toward low complexity. The short motif at H651–G653 is the Involved in the stabilization of the negatively charged intermediate by the formation of the oxyanion hole element. S725 is an active-site residue. Residues K838–P930 form a disordered region. S853 is subject to Phosphoserine. S855 carries the post-translational modification Phosphoserine; by AMPK. Positions R882–D908 are enriched in polar residues. Phosphoserine is present on residues S897, S929, S950, and S951. Active-site residues include D994 and H1024. A disordered region spans residues A1055–H1076. The span at G1067–H1076 shows a compositional bias: gly residues.

This sequence belongs to the 'GDXG' lipolytic enzyme family. In terms of assembly, monomer and homodimer. Interacts with CAVIN1 in the adipocyte cytoplasm. Interacts with PLIN5. Phosphorylation by AMPK reduces its translocation towards the lipid droplets. As to expression, testis.

The protein localises to the cell membrane. It localises to the membrane. Its subcellular location is the caveola. The protein resides in the cytoplasm. It is found in the cytosol. The protein localises to the lipid droplet. It carries out the reaction a diacylglycerol + H2O = a monoacylglycerol + a fatty acid + H(+). The catalysed reaction is a triacylglycerol + H2O = a diacylglycerol + a fatty acid + H(+). It catalyses the reaction a monoacylglycerol + H2O = glycerol + a fatty acid + H(+). The enzyme catalyses Hydrolyzes glycerol monoesters of long-chain fatty acids.. It carries out the reaction 1,2-di-(9Z-octadecenoyl)-glycerol + (9Z)-octadecenoate + H(+) = 1,2,3-tri-(9Z-octadecenoyl)-glycerol + H2O. The catalysed reaction is 2,3-di-(9Z)-octadecenoyl-sn-glycerol + H2O = 2-(9Z-octadecenoyl)-glycerol + (9Z)-octadecenoate + H(+). It catalyses the reaction cholesteryl (9Z-octadecenoate) + H2O = cholesterol + (9Z)-octadecenoate + H(+). The enzyme catalyses 1,2,3-tri-(9Z-octadecenoyl)-glycerol + H2O = di-(9Z)-octadecenoylglycerol + (9Z)-octadecenoate + H(+). It carries out the reaction all-trans-retinyl hexadecanoate + H2O = all-trans-retinol + hexadecanoate + H(+). The catalysed reaction is 1,2-di-(9Z-octadecenoyl)-glycerol + H2O = (9Z-octadecenoyl)-glycerol + (9Z)-octadecenoate + H(+). It catalyses the reaction 2-(5Z,8Z,11Z,14Z-eicosatetraenoyl)-glycerol + H2O = glycerol + (5Z,8Z,11Z,14Z)-eicosatetraenoate + H(+). The enzyme catalyses 1-(9Z-octadecenoyl)-glycerol + H2O = glycerol + (9Z)-octadecenoate + H(+). It carries out the reaction 2-(9Z-octadecenoyl)-glycerol + H2O = glycerol + (9Z)-octadecenoate + H(+). The catalysed reaction is 1-O-hexadecyl-2-acetyl-sn-glycerol + H2O = 1-O-hexadecyl-sn-glycerol + acetate + H(+). It catalyses the reaction 1,2-di-(9Z-octadecenoyl)-sn-glycerol + H2O = (9Z-octadecenoyl)-glycerol + (9Z)-octadecenoate + H(+). The enzyme catalyses 1,3-di-(9Z-octadecenoyl)-glycerol + H2O = 1-(9Z-octadecenoyl)-glycerol + (9Z)-octadecenoate + H(+). It carries out the reaction 1,2-di-(9Z-octadecenoyl)-glycerol + H2O = 2-(9Z-octadecenoyl)-glycerol + (9Z)-octadecenoate + H(+). It participates in glycerolipid metabolism; triacylglycerol degradation. Its activity is regulated as follows. Retinyl ester hydrolase is inhibited by bis-p-nitrophenyl phosphate. Lipase with broad substrate specificity, catalyzing the hydrolysis of triacylglycerols (TAGs), diacylglycerols (DAGs), monoacylglycerols (MAGs), cholesteryl esters and retinyl esters. Shows a preferential hydrolysis of DAGs over TAGs and MAGs and preferentially hydrolyzes the fatty acid (FA) esters at the sn-3 position of the glycerol backbone in DAGs. Preferentially hydrolyzes FA esters at the sn-1 and sn-2 positions of the glycerol backbone in TAGs. Catalyzes the hydrolysis of 2-arachidonoylglycerol, an endocannabinoid and of 2-acetyl monoalkylglycerol ether, the penultimate precursor of the pathway for de novo synthesis of platelet-activating factor. In adipose tissue and heart, it primarily hydrolyzes stored triglycerides to free fatty acids, while in steroidogenic tissues, it principally converts cholesteryl esters to free cholesterol for steroid hormone production. The polypeptide is Hormone-sensitive lipase (LIPE) (Homo sapiens (Human)).